A 197-amino-acid polypeptide reads, in one-letter code: Elongation factor Ts (197 aa).

The interval 81–84 (TDFV) is involved in Mg(2+) ion dislocation from EF-Tu.

The protein belongs to the EF-Ts family.

The protein resides in the cytoplasm. Its function is as follows. Associates with the EF-Tu.GDP complex and induces the exchange of GDP to GTP. It remains bound to the aminoacyl-tRNA.EF-Tu.GTP complex up to the GTP hydrolysis stage on the ribosome. The protein is Elongation factor Ts of Persephonella marina (strain DSM 14350 / EX-H1).